A 320-amino-acid chain; its full sequence is 3-hydroxybenzoate 6-hydroxylase 2 (320 aa).

The interval 1 to 25 (MRSTNTRSARSRPTKRSVNASATPT) is disordered. Residues 16–25 (RSVNASATPT) show a composition bias toward polar residues.

Belongs to the 3-hydroxybenzoate 6-hydroxylase family. FAD is required as a cofactor.

The enzyme catalyses 3-hydroxybenzoate + NADH + O2 + H(+) = 2,5-dihydroxybenzoate + NAD(+) + H2O. Catalyzes the conversion of 3-hydroxybenzoate to gentisate. This is 3-hydroxybenzoate 6-hydroxylase 2 (hbzD) from Aquipseudomonas alcaligenes (Pseudomonas alcaligenes).